Reading from the N-terminus, the 118-residue chain is Small ribosomal subunit protein uS13 (118 aa).

A disordered region spans residues 91 to 118 (HRRGLPVRGQRTRTNARTRKGPRRPIKK).

Belongs to the universal ribosomal protein uS13 family. Part of the 30S ribosomal subunit. Forms a loose heterodimer with protein S19. Forms two bridges to the 50S subunit in the 70S ribosome.

In terms of biological role, located at the top of the head of the 30S subunit, it contacts several helices of the 16S rRNA. In the 70S ribosome it contacts the 23S rRNA (bridge B1a) and protein L5 of the 50S subunit (bridge B1b), connecting the 2 subunits; these bridges are implicated in subunit movement. Contacts the tRNAs in the A and P-sites. The sequence is that of Small ribosomal subunit protein uS13 from Methylococcus capsulatus (strain ATCC 33009 / NCIMB 11132 / Bath).